Here is a 669-residue protein sequence, read N- to C-terminus: MQGVPGFNTVPNPNHYDKSIVLDIKPLRSLKPVFPNGNQGPPFVGCPPFGPSSSEYSSFFPFGAQQPTHDTPDLNQTQNTPIPSFVPPLRSYRTPTKTNGPSSSSGTKRGVGRPKGTTSVKKKEKKTVANEPNLDVQVVKKFSSDFDSGISAAEREDGNAYLVSSVLMRFDAVRRRLSQVEFTKSATSKAAGTLMSNGVRTNMKKRVGTVPGIEVGDIFFSRIEMCLVGLHMQTMAGIDYIISKAGSDEESLATSIVSSGRYEGEAQDPESLIYSGQGGNADKNRQASDQKLERGNLALENSLRKGNGVRVVRGEEDAASKTGKIYIYDGLYSISESWVEKGKSGCNTFKYKLVRQPGQPPAFGFWKSVQKWKEGLTTRPGLILPDLTSGAESKPVSLVNDVDEDKGPAYFTYTSSLKYSETFKLTQPVIGCSCSGSCSPGNHNCSCIRKNDGDLPYLNGVILVSRRPVIYECGPTCPCHASCKNRVIQTGLKSRLEVFKTRNRGWGLRSWDSLRAGSFICEYAGEVKDNGNLRGNQEEDAYVFDTSRVFNSFKWNYEPELVDEDPSTEVPEEFNLPSPLLISAKKFGNVARFMNHSCSPNVFWQPVIREGNGESVIHIAFFAMRHIPPMAELTYDYGISPTSEARDESLLHGQRTCLCGSEQCRGSFG.

Disordered stretches follow at residues 56-127 (YSSF…EKKT) and 270-290 (ESLI…ASDQ). Polar residues-rich tracts occupy residues 65–82 (QQPT…NTPI) and 93–107 (RTPT…SSGT). Positions 108–120 (KRGVGRPKGTTSV) form a DNA-binding region, a.T hook. The region spanning 208–355 (GTVPGIEVGD…CNTFKYKLVR (148 aa)) is the YDG domain. The Pre-SET domain maps to 430–491 (IGCSCSGSCS…SCKNRVIQTG (62 aa)). 9 residues coordinate Zn(2+): Cys432, Cys434, Cys438, Cys445, Cys447, Cys473, Cys477, Cys479, and Cys483. Residues 494–638 (SRLEVFKTRN…PMAELTYDYG (145 aa)) enclose the SET domain. Residues 504 to 506 (RGW), Asp540, Tyr542, Arg592, and 595 to 596 (NH) each bind S-adenosyl-L-methionine. 4 residues coordinate Zn(2+): Cys598, Cys657, Cys659, and Cys664. The Post-SET domain occupies 653 to 669 (GQRTCLCGSEQCRGSFG).

The protein belongs to the class V-like SAM-binding methyltransferase superfamily. Histone-lysine methyltransferase family. Suvar3-9 subfamily. In terms of tissue distribution, expressed in leaves stems and flowers.

The protein resides in the nucleus. It localises to the chromosome. It is found in the centromere. The catalysed reaction is L-lysyl(9)-[histone H3] + S-adenosyl-L-methionine = N(6)-methyl-L-lysyl(9)-[histone H3] + S-adenosyl-L-homocysteine + H(+). In terms of biological role, histone methyltransferase. Methylates 'Lys-9' of histone H3. H3 'Lys-9' methylation represents a specific tag for epigenetic transcriptional repression. This chain is Histone-lysine N-methyltransferase, H3 lysine-9 specific SUVH3 (SUVH3), found in Arabidopsis thaliana (Mouse-ear cress).